A 144-amino-acid polypeptide reads, in one-letter code: Transcription antitermination protein NusB (144 aa).

It belongs to the NusB family.

Functionally, involved in transcription antitermination. Required for transcription of ribosomal RNA (rRNA) genes. Binds specifically to the boxA antiterminator sequence of the ribosomal RNA (rrn) operons. In Dictyoglomus thermophilum (strain ATCC 35947 / DSM 3960 / H-6-12), this protein is Transcription antitermination protein NusB.